The chain runs to 361 residues: Biotin synthase (361 aa).

One can recognise a Radical SAM core domain in the interval 83–308 (PEVEVEGIIS…RTILRYAGGR (226 aa)). Positions 98, 102, and 105 each coordinate [4Fe-4S] cluster. The [2Fe-2S] cluster site is built by cysteine 141, cysteine 174, cysteine 233, and arginine 303.

It belongs to the radical SAM superfamily. Biotin synthase family. As to quaternary structure, homodimer. The cofactor is [4Fe-4S] cluster. [2Fe-2S] cluster is required as a cofactor.

The catalysed reaction is (4R,5S)-dethiobiotin + (sulfur carrier)-SH + 2 reduced [2Fe-2S]-[ferredoxin] + 2 S-adenosyl-L-methionine = (sulfur carrier)-H + biotin + 2 5'-deoxyadenosine + 2 L-methionine + 2 oxidized [2Fe-2S]-[ferredoxin]. The protein operates within cofactor biosynthesis; biotin biosynthesis; biotin from 7,8-diaminononanoate: step 2/2. In terms of biological role, catalyzes the conversion of dethiobiotin (DTB) to biotin by the insertion of a sulfur atom into dethiobiotin via a radical-based mechanism. The chain is Biotin synthase from Parafrankia sp. (strain EAN1pec).